The sequence spans 374 residues: Ribosomal RNA large subunit methyltransferase M (374 aa).

S-adenosyl-L-methionine-binding positions include S188, 221–224 (CPGG), D240, D260, and D276. K305 acts as the Proton acceptor in catalysis.

This sequence belongs to the class I-like SAM-binding methyltransferase superfamily. RNA methyltransferase RlmE family. RlmM subfamily. As to quaternary structure, monomer.

Its subcellular location is the cytoplasm. It carries out the reaction cytidine(2498) in 23S rRNA + S-adenosyl-L-methionine = 2'-O-methylcytidine(2498) in 23S rRNA + S-adenosyl-L-homocysteine + H(+). Its function is as follows. Catalyzes the 2'-O-methylation at nucleotide C2498 in 23S rRNA. This Edwardsiella ictaluri (strain 93-146) protein is Ribosomal RNA large subunit methyltransferase M.